A 72-amino-acid chain; its full sequence is MKKKIHPRYSKITATCSCGNIIEIFSTINHNLNLDICAKCHPFYTGKQRVIDTGGRVERFKKRFKFTKQELN.

Positions 16, 18, 37, and 40 each coordinate Zn(2+).

Belongs to the bacterial ribosomal protein bL31 family. Type A subfamily. In terms of assembly, part of the 50S ribosomal subunit. The cofactor is Zn(2+).

In terms of biological role, binds the 23S rRNA. This chain is Large ribosomal subunit protein bL31, found in Buchnera aphidicola subsp. Acyrthosiphon pisum (strain APS) (Acyrthosiphon pisum symbiotic bacterium).